The following is a 770-amino-acid chain: 1,4-alpha-glucan branching enzyme GlgB (770 aa).

The active-site Nucleophile is D437. Catalysis depends on E488, which acts as the Proton donor.

This sequence belongs to the glycosyl hydrolase 13 family. GlgB subfamily. Monomer.

The enzyme catalyses Transfers a segment of a (1-&gt;4)-alpha-D-glucan chain to a primary hydroxy group in a similar glucan chain.. The protein operates within glycan biosynthesis; glycogen biosynthesis. Functionally, catalyzes the formation of the alpha-1,6-glucosidic linkages in glycogen by scission of a 1,4-alpha-linked oligosaccharide from growing alpha-1,4-glucan chains and the subsequent attachment of the oligosaccharide to the alpha-1,6 position. In Synechococcus sp. (strain JA-3-3Ab) (Cyanobacteria bacterium Yellowstone A-Prime), this protein is 1,4-alpha-glucan branching enzyme GlgB.